The chain runs to 404 residues: Metacaspase-1 (404 aa).

The tract at residues 1 to 97 is disordered; it reads MHHHHQQPSY…NPQAFGHGAP (97 aa). Active-site residues include His195 and Cys251.

The protein belongs to the peptidase C14B family.

Involved in cell death (apoptosis). This Emericella nidulans (strain FGSC A4 / ATCC 38163 / CBS 112.46 / NRRL 194 / M139) (Aspergillus nidulans) protein is Metacaspase-1 (casA).